The sequence spans 462 residues: Signal recognition particle protein (462 aa).

GTP-binding positions include glycine 107–threonine 114, aspartate 190–arginine 194, and threonine 248–aspartate 251.

Belongs to the GTP-binding SRP family. SRP54 subfamily. As to quaternary structure, part of the signal recognition particle protein translocation system, which is composed of SRP and FtsY. SRP is a ribonucleoprotein composed of Ffh and a 4.5S RNA molecule.

The protein localises to the cytoplasm. It catalyses the reaction GTP + H2O = GDP + phosphate + H(+). In terms of biological role, involved in targeting and insertion of nascent membrane proteins into the cytoplasmic membrane. Binds to the hydrophobic signal sequence of the ribosome-nascent chain (RNC) as it emerges from the ribosomes. The SRP-RNC complex is then targeted to the cytoplasmic membrane where it interacts with the SRP receptor FtsY. Interaction with FtsY leads to the transfer of the RNC complex to the Sec translocase for insertion into the membrane, the hydrolysis of GTP by both Ffh and FtsY, and the dissociation of the SRP-FtsY complex into the individual components. In Haemophilus influenzae (strain ATCC 51907 / DSM 11121 / KW20 / Rd), this protein is Signal recognition particle protein.